The following is a 185-amino-acid chain: Ribosome-recycling factor (185 aa).

It belongs to the RRF family.

The protein localises to the cytoplasm. Its function is as follows. Responsible for the release of ribosomes from messenger RNA at the termination of protein biosynthesis. May increase the efficiency of translation by recycling ribosomes from one round of translation to another. The polypeptide is Ribosome-recycling factor (Thioalkalivibrio sulfidiphilus (strain HL-EbGR7)).